The chain runs to 539 residues: Chitin deacetylase 1 (539 aa).

The first 23 residues, 1 to 23 (MARYARVATLAACLLFACALADG), serve as a signal peptide directing secretion. Positions 42-104 (QELCKDKDAG…WKDAVKNCKL (63 aa)) constitute a Chitin-binding type-2 domain. 6 disulfides stabilise this stretch: cysteine 80/cysteine 93, cysteine 122/cysteine 134, cysteine 129/cysteine 147, cysteine 141/cysteine 156, cysteine 168/cysteine 180, and cysteine 173/cysteine 178. In terms of domain architecture, LDL-receptor class A spans 121–157 (LCQDGFLACGDSTCIERGLFCNGEKDCGDGSDENSCD). Residue aspartate 206 coordinates Zn(2+). 5 disulfides stabilise this stretch: cysteine 230/cysteine 489, cysteine 354/cysteine 361, cysteine 391/cysteine 397, cysteine 497/cysteine 520, and cysteine 503/cysteine 523. N-linked (GlcNAc...) asparagine glycosylation is present at asparagine 244. Residues histidine 261 and histidine 265 each contribute to the Zn(2+) site. Asparagine 296 is a glycosylation site (N-linked (GlcNAc...) asparagine).

This sequence belongs to the carbohydrate esterase 4 (CE4) family. Interacts with CPAP3-A1. Zn(2+) is required as a cofactor. As to expression, highly expressed in epidermis and head. Moderate expression levels in fat body, Malpighian tubule, testis and midgut. Low expression in silk gland and ovary.

Its subcellular location is the secreted. The enzyme catalyses [(1-&gt;4)-N-acetyl-beta-D-glucosaminyl](n) + n H2O = chitosan + n acetate. Binding to the accessory protein CPAP3-A1 is essential for chitinase activity. Its function is as follows. Hydrolyzes the N-acetamido groups of N-acetyl-D-glucosamine residues in chitin. The protein is Chitin deacetylase 1 of Bombyx mori (Silk moth).